A 570-amino-acid chain; its full sequence is NADH-ubiquinone oxidoreductase chain 5 (570 aa).

16 helical membrane-spanning segments follow: residues 2–22, 27–47, 56–76, 77–97, 109–129, 134–154, 179–199, 221–241, 251–271, 285–305, 311–330, 335–357, 380–400, 417–437, 476–496, and 524–544; these read FSFFFSFYALSVIFSLLFKHF, GVFLLNTTSIGLFWAYSLSNL, LIAIHLFRWFPLSAGYLVNFS, FYIDTVAYSFTLLTLTIGVFV, PHISRLISLINAFIASMIILV, LVVFFFGWELIGITSFFLINF, VLIALILIYANVHDLNFEAIL, LISFCLLFAAFVKSAQFGFHV, VPASALIHSATLVSAGVFLIM, LVTALVGALTALAGGLSAVFQ, ILAYSTISHCGFLIFLCSFG, VIVYLFVHGFFKAISFLCVGNLI, FFFLVFSLLNLSGLPFFFGFY, AIFCMILLSCITGLFYSFNIL, IFLLIVSSCLLCAYLINFYLL, and LLNYSFFYWIIAIFFVILVLF.

The protein belongs to the complex I subunit 5 family.

Its subcellular location is the mitochondrion inner membrane. The catalysed reaction is a ubiquinone + NADH + 5 H(+)(in) = a ubiquinol + NAD(+) + 4 H(+)(out). Functionally, core subunit of the mitochondrial membrane respiratory chain NADH dehydrogenase (Complex I) that is believed to belong to the minimal assembly required for catalysis. Complex I functions in the transfer of electrons from NADH to the respiratory chain. The immediate electron acceptor for the enzyme is believed to be ubiquinone. This is NADH-ubiquinone oxidoreductase chain 5 (ND5) from Paramecium tetraurelia.